The primary structure comprises 474 residues: tRNA-2-methylthio-N(6)-dimethylallyladenosine synthase (474 aa).

The 118-residue stretch at 3–120 folds into the MTTase N-terminal domain; it reads KKLHIKTWGC…LPEMIEQVRR (118 aa). [4Fe-4S] cluster-binding residues include cysteine 12, cysteine 49, cysteine 83, cysteine 157, cysteine 161, and cysteine 164. A Radical SAM core domain is found at 143–375; sequence RAEGPTAFVS…QDRITQQAMR (233 aa). Positions 378–441 constitute a TRAM domain; that stretch reads RHMMGTVQRI…TNSLRGVFIR (64 aa).

The protein belongs to the methylthiotransferase family. MiaB subfamily. In terms of assembly, monomer. [4Fe-4S] cluster is required as a cofactor.

Its subcellular location is the cytoplasm. It catalyses the reaction N(6)-dimethylallyladenosine(37) in tRNA + (sulfur carrier)-SH + AH2 + 2 S-adenosyl-L-methionine = 2-methylsulfanyl-N(6)-dimethylallyladenosine(37) in tRNA + (sulfur carrier)-H + 5'-deoxyadenosine + L-methionine + A + S-adenosyl-L-homocysteine + 2 H(+). Catalyzes the methylthiolation of N6-(dimethylallyl)adenosine (i(6)A), leading to the formation of 2-methylthio-N6-(dimethylallyl)adenosine (ms(2)i(6)A) at position 37 in tRNAs that read codons beginning with uridine. The chain is tRNA-2-methylthio-N(6)-dimethylallyladenosine synthase from Shewanella baltica (strain OS155 / ATCC BAA-1091).